Consider the following 166-residue polypeptide: Putative 4-hydroxy-4-methyl-2-oxoglutarate aldolase (166 aa).

Residues 74 to 77 (GDQI) and R96 each bind substrate. D97 is an a divalent metal cation binding site.

This sequence belongs to the class II aldolase/RraA-like family. As to quaternary structure, homotrimer. The cofactor is a divalent metal cation.

The enzyme catalyses 4-hydroxy-4-methyl-2-oxoglutarate = 2 pyruvate. It carries out the reaction oxaloacetate + H(+) = pyruvate + CO2. Its function is as follows. Catalyzes the aldol cleavage of 4-hydroxy-4-methyl-2-oxoglutarate (HMG) into 2 molecules of pyruvate. Also contains a secondary oxaloacetate (OAA) decarboxylase activity due to the common pyruvate enolate transition state formed following C-C bond cleavage in the retro-aldol and decarboxylation reactions. The polypeptide is Putative 4-hydroxy-4-methyl-2-oxoglutarate aldolase (Xanthomonas campestris pv. campestris (strain B100)).